The sequence spans 61 residues: Large ribosomal subunit protein uL30 (61 aa).

Belongs to the universal ribosomal protein uL30 family. In terms of assembly, part of the 50S ribosomal subunit.

The protein is Large ribosomal subunit protein uL30 of Corynebacterium glutamicum (strain ATCC 13032 / DSM 20300 / JCM 1318 / BCRC 11384 / CCUG 27702 / LMG 3730 / NBRC 12168 / NCIMB 10025 / NRRL B-2784 / 534).